A 1377-amino-acid polypeptide reads, in one-letter code: DNA-directed RNA polymerase subunit beta (1377 aa).

It belongs to the RNA polymerase beta chain family. As to quaternary structure, the RNAP catalytic core consists of 2 alpha, 1 beta, 1 beta' and 1 omega subunit. When a sigma factor is associated with the core the holoenzyme is formed, which can initiate transcription.

The catalysed reaction is RNA(n) + a ribonucleoside 5'-triphosphate = RNA(n+1) + diphosphate. Its function is as follows. DNA-dependent RNA polymerase catalyzes the transcription of DNA into RNA using the four ribonucleoside triphosphates as substrates. The chain is DNA-directed RNA polymerase subunit beta from Brucella canis (strain ATCC 23365 / NCTC 10854 / RM-666).